The sequence spans 552 residues: 5'-AMP-activated protein kinase catalytic subunit alpha-2 (552 aa).

Residues 16 to 268 (YVLGDTLGVG…IKDIREHEWF (253 aa)) enclose the Protein kinase domain. ATP contacts are provided by residues 22–30 (LGVGTFGKV) and lysine 45. Aspartate 139 acts as the Proton acceptor in catalysis. Residue threonine 172 is modified to Phosphothreonine; by LKB1 and CaMKK2. A Phosphothreonine modification is found at threonine 258. Residues 291 to 376 (EAVKEVCEKF…PERMPPLIAD (86 aa)) form an AIS region. At serine 377 the chain carries Phosphoserine. The interval 477–521 (VEQRSGSSTPQRSCSAAGLHRPRSSFDSTTAESHSLSGSLTGSLT) is disordered. Positions 480–490 (RSGSSTPQRSC) are enriched in polar residues. At serine 491 the chain carries Phosphoserine. Residues 501-510 (SFDSTTAESH) are compositionally biased toward polar residues. Low complexity predominate over residues 511 to 521 (SLSGSLTGSLT).

This sequence belongs to the protein kinase superfamily. CAMK Ser/Thr protein kinase family. SNF1 subfamily. In terms of assembly, AMPK is a heterotrimer of an alpha catalytic subunit (PRKAA1 or PRKAA2), a beta (PRKAB1 or PRKAB2) and a gamma non-catalytic subunits (PRKAG1, PRKAG2 or PRKAG3). Interacts with FNIP1 and FNIP2. Associates with internalized insulin receptor/INSR complexes on Golgi/endosomal membranes; PRKAA2/AMPK2 together with ATIC and HACD3/PTPLAD1 is proposed to be part of a signaling network regulating INSR autophosphorylation and endocytosis. Interacts with ARF6. The phosphorylated form at Thr-172 mediated by CamKK2 interacts with ACSS2. Mg(2+) serves as cofactor. Ubiquitinated. In terms of processing, phosphorylated at Thr-172 by STK11/LKB1 in complex with STE20-related adapter-alpha (STRADA) pseudo kinase and CAB39. Also phosphorylated at Thr-172 by CAMKK2; triggered by a rise in intracellular calcium ions, without detectable changes in the AMP/ATP ratio. CAMKK1 can also phosphorylate Thr-172, but at much lower level. Dephosphorylated by protein phosphatase 2A and 2C (PP2A and PP2C). Phosphorylated by ULK1; leading to negatively regulate AMPK activity and suggesting the existence of a regulatory feedback loop between ULK1 and AMPK. Dephosphorylated by PPM1A and PPM1B at Thr-172 (mediated by STK11/LKB1).

It localises to the cytoplasm. The protein resides in the nucleus. The enzyme catalyses L-seryl-[protein] + ATP = O-phospho-L-seryl-[protein] + ADP + H(+). It catalyses the reaction L-threonyl-[protein] + ATP = O-phospho-L-threonyl-[protein] + ADP + H(+). The catalysed reaction is L-seryl-[acetyl-CoA carboxylase] + ATP = O-phospho-L-seryl-[acetyl-CoA carboxylase] + ADP + H(+). It carries out the reaction L-seryl-[3-hydroxy-3-methylglutaryl-coenzyme A reductase] + ATP = O-phospho-L-seryl-[3-hydroxy-3-methylglutaryl-coenzyme A reductase] + ADP + H(+). With respect to regulation, activated by phosphorylation on Thr-172. Binding of AMP to non-catalytic gamma subunit (PRKAG1, PRKAG2 or PRKAG3) results in allosteric activation, inducing phosphorylation on Thr-172. AMP-binding to gamma subunit also sustains activity by preventing dephosphorylation of Thr-172. ADP also stimulates Thr-172 phosphorylation, without stimulating already phosphorylated AMPK. ATP promotes dephosphorylation of Thr-172, rendering the enzyme inactive. Under physiological conditions AMPK mainly exists in its inactive form in complex with ATP, which is much more abundant than AMP. AMPK is activated by antihyperglycemic drug metformin, a drug prescribed to patients with type 2 diabetes: in vivo, metformin seems to mainly inhibit liver gluconeogenesis. However, metformin can be used to activate AMPK in muscle and other cells in culture or ex vivo. Selectively inhibited by compound C (6-[4-(2-Piperidin-1-yl-ethoxy)-phenyl)]-3-pyridin-4-yl-pyyrazolo[1,5-a] pyrimidine. Activated by resveratrol, a natural polyphenol present in red wine, and S17834, a synthetic polyphenol. Salicylate/aspirin directly activates kinase activity, primarily by inhibiting Thr-172 dephosphorylation. Functionally, catalytic subunit of AMP-activated protein kinase (AMPK), an energy sensor protein kinase that plays a key role in regulating cellular energy metabolism. In response to reduction of intracellular ATP levels, AMPK activates energy-producing pathways and inhibits energy-consuming processes: inhibits protein, carbohydrate and lipid biosynthesis, as well as cell growth and proliferation. AMPK acts via direct phosphorylation of metabolic enzymes, and by longer-term effects via phosphorylation of transcription regulators. Regulates lipid synthesis by phosphorylating and inactivating lipid metabolic enzymes such as ACACA, ACACB, GYS1, HMGCR and LIPE; regulates fatty acid and cholesterol synthesis by phosphorylating acetyl-CoA carboxylase (ACACA and ACACB) and hormone-sensitive lipase (LIPE) enzymes, respectively. Promotes lipolysis of lipid droplets by mediating phosphorylation of isoform 1 of CHKA (CHKalpha2). Regulates insulin-signaling and glycolysis by phosphorylating IRS1, PFKFB2 and PFKFB3. Involved in insulin receptor/INSR internalization. AMPK stimulates glucose uptake in muscle by increasing the translocation of the glucose transporter SLC2A4/GLUT4 to the plasma membrane, possibly by mediating phosphorylation of TBC1D4/AS160. Regulates transcription and chromatin structure by phosphorylating transcription regulators involved in energy metabolism such as CRTC2/TORC2, FOXO3, histone H2B, HDAC5, MEF2C, MLXIPL/ChREBP, EP300, HNF4A, p53/TP53, SREBF1, SREBF2 and PPARGC1A. Acts as a key regulator of glucose homeostasis in liver by phosphorylating CRTC2/TORC2, leading to CRTC2/TORC2 sequestration in the cytoplasm. In response to stress, phosphorylates 'Ser-36' of histone H2B (H2BS36ph), leading to promote transcription. Acts as a key regulator of cell growth and proliferation by phosphorylating FNIP1, TSC2, RPTOR, WDR24 and ATG1/ULK1: in response to nutrient limitation, negatively regulates the mTORC1 complex by phosphorylating RPTOR component of the mTORC1 complex and by phosphorylating and activating TSC2. Also phosphorylates and inhibits GATOR2 subunit WDR24 in response to nutrient limitation, leading to suppress glucose-mediated mTORC1 activation. In response to energetic stress, phosphorylates FNIP1, inactivating the non-canonical mTORC1 signaling, thereby promoting nuclear translocation of TFEB and TFE3, and inducing transcription of lysosomal or autophagy genes. In response to nutrient limitation, promotes autophagy by phosphorylating and activating ATG1/ULK1. In that process, it also activates WDR45/WIPI4. Phosphorylates CASP6, thereby preventing its autoprocessing and subsequent activation. AMPK also acts as a regulator of circadian rhythm by mediating phosphorylation of CRY1, leading to destabilize it. May regulate the Wnt signaling pathway by phosphorylating CTNNB1, leading to stabilize it. Also acts as a regulator of cellular polarity by remodeling the actin cytoskeleton; probably by indirectly activating myosin. Also phosphorylates CFTR, EEF2K, KLC1, NOS3 and SLC12A1. Plays an important role in the differential regulation of pro-autophagy (composed of PIK3C3, BECN1, PIK3R4 and UVRAG or ATG14) and non-autophagy (composed of PIK3C3, BECN1 and PIK3R4) complexes, in response to glucose starvation. Can inhibit the non-autophagy complex by phosphorylating PIK3C3 and can activate the pro-autophagy complex by phosphorylating BECN1. Upon glucose starvation, promotes ARF6 activation in a kinase-independent manner leading to cell migration. Upon glucose deprivation mediates the phosphorylation of ACSS2 at 'Ser-659', which exposes the nuclear localization signal of ACSS2, required for its interaction with KPNA1 and nuclear translocation. Upon stress, regulates mitochondrial fragmentation through phosphorylation of MTFR1L. The chain is 5'-AMP-activated protein kinase catalytic subunit alpha-2 from Homo sapiens (Human).